Reading from the N-terminus, the 372-residue chain is Probable butyrate kinase (372 aa).

It belongs to the acetokinase family.

It localises to the cytoplasm. It carries out the reaction butanoate + ATP = butanoyl phosphate + ADP. The protein is Probable butyrate kinase of Oleidesulfovibrio alaskensis (strain ATCC BAA-1058 / DSM 17464 / G20) (Desulfovibrio alaskensis).